The primary structure comprises 232 residues: Phosphoribosylaminoimidazole-succinocarboxamide synthase (232 aa).

Belongs to the SAICAR synthetase family.

The catalysed reaction is 5-amino-1-(5-phospho-D-ribosyl)imidazole-4-carboxylate + L-aspartate + ATP = (2S)-2-[5-amino-1-(5-phospho-beta-D-ribosyl)imidazole-4-carboxamido]succinate + ADP + phosphate + 2 H(+). Its pathway is purine metabolism; IMP biosynthesis via de novo pathway; 5-amino-1-(5-phospho-D-ribosyl)imidazole-4-carboxamide from 5-amino-1-(5-phospho-D-ribosyl)imidazole-4-carboxylate: step 1/2. This chain is Phosphoribosylaminoimidazole-succinocarboxamide synthase, found in Finegoldia magna (strain ATCC 29328 / DSM 20472 / WAL 2508) (Peptostreptococcus magnus).